Here is a 456-residue protein sequence, read N- to C-terminus: Protein king tubby (456 aa).

Residues 111–202 (HELEDEESSP…SNGAGGESEG (92 aa)) are disordered. Residues 120–152 (PVTVIEQQQTAPHSANSTHSQRPSTTRQPSFND) are compositionally biased toward polar residues. Serine 149 carries the phosphoserine modification.

This sequence belongs to the TUB family.

The protein resides in the cytoplasm. It is found in the nucleus. It localises to the cell projection. Its subcellular location is the cilium membrane. The protein localises to the rhabdomere. This Drosophila pseudoobscura pseudoobscura (Fruit fly) protein is Protein king tubby.